The sequence spans 171 residues: Small ribosomal subunit protein uS13 (171 aa).

The segment covering 1–11 has biased composition (polar residues); that stretch reads MAKGSANNVKV. Disordered stretches follow at residues 1–24 and 144–164; these read MAKG…EKKE and EKGK…GLSI. Basic residues predominate over residues 144–158; sequence EKGKKVRGQRTRSNG.

This sequence belongs to the universal ribosomal protein uS13 family. As to quaternary structure, part of the 30S ribosomal subunit. Forms a loose heterodimer with protein S19. Forms two bridges to the 50S subunit in the 70S ribosome.

Its function is as follows. Located at the top of the head of the 30S subunit, it contacts several helices of the 16S rRNA. In the 70S ribosome it contacts the 23S rRNA (bridge B1a) and protein L5 of the 50S subunit (bridge B1b), connecting the 2 subunits; these bridges are implicated in subunit movement. This is Small ribosomal subunit protein uS13 from Thermoplasma acidophilum (strain ATCC 25905 / DSM 1728 / JCM 9062 / NBRC 15155 / AMRC-C165).